We begin with the raw amino-acid sequence, 196 residues long: uncharacterized protein (196 aa).

FAD-binding positions include 15–22 (SQGKFNKT), 68–71 (GWWM), Tyr107, and 123–126 (TWNA).

It belongs to the oxidoreductase MdaB family. Requires FAD as cofactor.

This is an uncharacterized protein from Schizosaccharomyces pombe (strain 972 / ATCC 24843) (Fission yeast).